We begin with the raw amino-acid sequence, 596 residues long: Nitrite reductase (596 aa).

Residues 1-29 form the signal peptide; sequence MRQRTPFARPGLLASAALALVLGPLAASA. Positions 30 to 76 are N-terminal tail; the sequence is QEQVAPPKDPAAALEDHKTRTDNRYEPSLDNLAQQDVAAPGAPEGVS. A heme c-binding site is contributed by His46. The heme d1 site is built by Tyr54 and Ser57. One can recognise a Cytochrome c domain in the interval 77-162; that stretch reads ALSDAQYNEA…ANYLLLDPAA (86 aa). Residues Cys94, Cys97, His98, Lys108, and Tyr122 each coordinate heme c. Trp138, Arg203, His229, Arg232, Arg245, Arg272, Tyr292, Arg420, Gln536, and Thr583 together coordinate heme d1. The interval 163–596 is D1-heme domain; that stretch reads PPEFGMKEMR…NVYNTMTDTY (434 aa).

In terms of assembly, homodimer. Heme c serves as cofactor. Heme is required as a cofactor.

The protein resides in the periplasm. It carries out the reaction nitric oxide + Fe(III)-[cytochrome c] + H2O = Fe(II)-[cytochrome c] + nitrite + 2 H(+). The enzyme catalyses A + NH4(+) + H2O = hydroxylamine + AH2 + H(+). The sequence is that of Nitrite reductase (nirS) from Paracoccus pantotrophus (Thiosphaera pantotropha).